A 246-amino-acid chain; its full sequence is DNA repair protein RecO (246 aa).

The protein belongs to the RecO family.

In terms of biological role, involved in DNA repair and RecF pathway recombination. The protein is DNA repair protein RecO of Methylorubrum extorquens (strain CM4 / NCIMB 13688) (Methylobacterium extorquens).